A 212-amino-acid chain; its full sequence is MSVTLHTTHGDLKVELFCEAVPQTAENFLALCACGAYNNTPFHRIFPGFMIQGGDISLGPAPGTLNTLKPMLPVNEIPKGGTSIYHPRALNQEIHLPALRHNARGILSMASRPVKDRTAPGSQGATGATVNGSQFFITFAAAPHLDGASTVFGKVLNLSPQDEGGDVLSKLEKAKLKVDKKGRVTQPKEGEEGGYEAIGINSVTIHANPFAK.

The region spanning 1 to 198 (MSVTLHTTHG…EGEEGGYEAI (198 aa)) is the PPIase cyclophilin-type domain.

The protein belongs to the cyclophilin-type PPIase family. PPIL3 subfamily.

The catalysed reaction is [protein]-peptidylproline (omega=180) = [protein]-peptidylproline (omega=0). Its function is as follows. PPIases accelerate the folding of proteins. It catalyzes the cis-trans isomerization of proline imidic peptide bonds in oligopeptides. The protein is Peptidyl-prolyl cis-trans isomerase-like 3 (cyp10) of Aspergillus fumigatus (strain ATCC MYA-4609 / CBS 101355 / FGSC A1100 / Af293) (Neosartorya fumigata).